Here is a 155-residue protein sequence, read N- to C-terminus: Vasotocin-neurophysin VT 2 (155 aa).

The first 20 residues, Met-1–Ala-20, serve as a signal peptide directing secretion. Cys-21 and Cys-26 are disulfide-bonded. Gly-29 is modified (glycine amide). Disulfide bonds link Cys-42-Cys-86, Cys-45-Cys-59, Cys-53-Cys-76, Cys-60-Cys-66, Cys-93-Cys-106, Cys-100-Cys-118, and Cys-107-Cys-112. A compositionally biased stretch (acidic residues) spans Ser-119 to Ala-128. The disordered stretch occupies residues Ser-119–Glu-139.

The protein belongs to the vasopressin/oxytocin family.

The protein localises to the secreted. Its function is as follows. Vasotocin is an antidiuretic hormone. In Catostomus commersonii (White sucker), this protein is Vasotocin-neurophysin VT 2.